We begin with the raw amino-acid sequence, 306 residues long: Protein LOT5 (306 aa).

Belongs to the LOT5 family.

It is found in the cytoplasm. Its subcellular location is the nucleus. This chain is Protein LOT5 (LOT5), found in Saccharomyces cerevisiae (strain ATCC 204508 / S288c) (Baker's yeast).